A 497-amino-acid polypeptide reads, in one-letter code: Tryptophan decarboxylase 2 (497 aa).

Ala162, Ser163, Thr257, and Asn311 together coordinate pyridoxal 5'-phosphate. The residue at position 314 (Lys314) is an N6-(pyridoxal phosphate)lysine.

Belongs to the group II decarboxylase family. It depends on pyridoxal 5'-phosphate as a cofactor.

It carries out the reaction L-tryptophan + H(+) = tryptamine + CO2. Functionally, involved in serotonin biosynthesis. Catalyzes the decarboxylation of L-tryptophan to tryptamine, which is converted to serotonin by tryptamine 5-hydroxylase. May play a minor role in serotonin biosynthetis during senescence. Accumulation of serotonin attenuates leaf senescence. The protein is Tryptophan decarboxylase 2 of Oryza sativa subsp. japonica (Rice).